A 504-amino-acid polypeptide reads, in one-letter code: 2,3-bisphosphoglycerate-independent phosphoglycerate mutase (504 aa).

The Mn(2+) site is built by D9 and S59. S59 functions as the Phosphoserine intermediate in the catalytic mechanism. Residues H120, 149–150 (RD), R181, R187, 253–256 (RPDR), and K326 each bind substrate. 5 residues coordinate Mn(2+): D393, H397, D434, H435, and H451.

It belongs to the BPG-independent phosphoglycerate mutase family. Mn(2+) serves as cofactor.

It carries out the reaction (2R)-2-phosphoglycerate = (2R)-3-phosphoglycerate. It participates in carbohydrate degradation; glycolysis; pyruvate from D-glyceraldehyde 3-phosphate: step 3/5. Its function is as follows. Catalyzes the interconversion of 2-phosphoglycerate and 3-phosphoglycerate. The protein is 2,3-bisphosphoglycerate-independent phosphoglycerate mutase of Haloquadratum walsbyi (strain DSM 16790 / HBSQ001).